The sequence spans 193 residues: Peptidyl-tRNA hydrolase (193 aa).

Tyr-15 lines the tRNA pocket. The active-site Proton acceptor is the His-20. TRNA contacts are provided by Phe-65, Asn-67, and Asn-113.

This sequence belongs to the PTH family. In terms of assembly, monomer.

Its subcellular location is the cytoplasm. It catalyses the reaction an N-acyl-L-alpha-aminoacyl-tRNA + H2O = an N-acyl-L-amino acid + a tRNA + H(+). Its function is as follows. Hydrolyzes ribosome-free peptidyl-tRNAs (with 1 or more amino acids incorporated), which drop off the ribosome during protein synthesis, or as a result of ribosome stalling. Functionally, catalyzes the release of premature peptidyl moieties from peptidyl-tRNA molecules trapped in stalled 50S ribosomal subunits, and thus maintains levels of free tRNAs and 50S ribosomes. The sequence is that of Peptidyl-tRNA hydrolase from Ehrlichia ruminantium (strain Gardel).